The sequence spans 250 residues: Tryptophan synthase alpha chain (250 aa).

Catalysis depends on proton acceptor residues Glu31 and Asp42.

The protein belongs to the TrpA family. Tetramer of two alpha and two beta chains.

The enzyme catalyses (1S,2R)-1-C-(indol-3-yl)glycerol 3-phosphate + L-serine = D-glyceraldehyde 3-phosphate + L-tryptophan + H2O. It participates in amino-acid biosynthesis; L-tryptophan biosynthesis; L-tryptophan from chorismate: step 5/5. The alpha subunit is responsible for the aldol cleavage of indoleglycerol phosphate to indole and glyceraldehyde 3-phosphate. This is Tryptophan synthase alpha chain from Staphylococcus carnosus (strain TM300).